The primary structure comprises 60 residues: Potassium channel toxin alpha-KTx 15.8 (60 aa).

The N-terminal stretch at 1 to 22 (MKFSSIILLTLLICSMSIFGNC) is a signal peptide. Q23 carries the pyrrolidone carboxylic acid modification. Cystine bridges form between C30–C50, C35–C55, and C39–C57.

This sequence belongs to the short scorpion toxin superfamily. Potassium channel inhibitor family. Alpha-KTx 15 subfamily. In terms of tissue distribution, expressed by the venom gland.

The protein localises to the secreted. Functionally, blocker of A-type voltage-gated potassium channels of cerebellar granular cells. May also inhibit Kv4/KCND when coexpressed with DPP6 or DPP10. The occlusion of the outer entry of the K(+) conducting pore is partially reversible and affects both open and closed channels. It shares the same target in rat brain than BmTX3 (AC Q8I0L5) and AmmTX3 (AC P60208). Also shows a weak inhibition on Kv1.2/KCNA2 and Kv1.3/KCNA3 voltage-gated potassium channels. The sequence is that of Potassium channel toxin alpha-KTx 15.8 from Olivierus martensii (Manchurian scorpion).